A 308-amino-acid polypeptide reads, in one-letter code: Ribosomal RNA large subunit methyltransferase F (308 aa).

It belongs to the methyltransferase superfamily. METTL16/RlmF family.

It localises to the cytoplasm. It catalyses the reaction adenosine(1618) in 23S rRNA + S-adenosyl-L-methionine = N(6)-methyladenosine(1618) in 23S rRNA + S-adenosyl-L-homocysteine + H(+). In terms of biological role, specifically methylates the adenine in position 1618 of 23S rRNA. This is Ribosomal RNA large subunit methyltransferase F from Escherichia coli O17:K52:H18 (strain UMN026 / ExPEC).